Here is a 677-residue protein sequence, read N- to C-terminus: Probable sulfate transporter 4.2 (677 aa).

Topologically, residues 1 to 83 (MSLAVKDLST…RTYRWHQYFK (83 aa)) are cytoplasmic. The helical transmembrane segment at 84–104 (LDLMAGITVGIMLVPQAMSYA) threads the bilayer. The Extracellular segment spans residues 105 to 108 (RLAG). A helical membrane pass occupies residues 109–129 (LQPIYGLYSSFVPVFVYAVFG). Residues 130-133 (SSRQ) are Cytoplasmic-facing. The chain crosses the membrane as a helical span at residues 134 to 154 (LAVGPVALVSLLVSNALSGIV). The Extracellular segment spans residues 155–161 (DPSEELY). A helical transmembrane segment spans residues 162-182 (TELAILLALMVGIFESIMGFL). Over 183-189 (RLGWLIR) the chain is Cytoplasmic. A helical transmembrane segment spans residues 190–210 (FISHSVISGFTTASAVVIGLS). Topologically, residues 211 to 241 (QLKYFLGYSVSRSSKIMPVIDSIIAGADQFK) are extracellular. Residues 242–262 (WPPFLLGCTILVILLVMKHVG) traverse the membrane as a helical segment. The Cytoplasmic portion of the chain corresponds to 263-269 (KAKKELR). Residues 270-290 (FIRAAGPLTGLALGTIIAKVF) form a helical membrane-spanning segment. The Extracellular portion of the chain corresponds to 291–318 (HPPSITLVGDIPQGLPKFSFPKSFDHAK). The helical transmembrane segment at 319 to 339 (LLLPTSALITGVAILESVGIA) threads the bilayer. Residues 340–355 (KALAAKNRYELDSNSE) lie on the Cytoplasmic side of the membrane. Residues 356–376 (LFGLGVANIFGSLFSAYPTTG) traverse the membrane as a helical segment. The Extracellular portion of the chain corresponds to 377–392 (SFSRSAVNSESEAKTG). Residues 393–413 (LSGLVTGIIIGCSLLFLTPMF) form a helical membrane-spanning segment. The Cytoplasmic segment spans residues 414-420 (KFIPQCA). Residues 421–441 (LAAIVISAVSGLVDYEGAIFL) traverse the membrane as a helical segment. Residues 442-459 (WRVDKRDFTLWTITSTTT) are Extracellular-facing. A helical membrane pass occupies residues 460–480 (LFFGIEIGVLIGVGFSLAFVI). The Cytoplasmic portion of the chain corresponds to 481 to 677 (HESANPHIAV…LEEPLLSREK (197 aa)). Residues 505-629 (QYPEAYTYNG…VRVHDAVQVC (125 aa)) enclose the STAS domain.

Belongs to the SLC26A/SulP transporter (TC 2.A.53) family.

Its subcellular location is the membrane. Functionally, h(+)/sulfate cotransporter that may play a role in the regulation of sulfate assimilation. The sequence is that of Probable sulfate transporter 4.2 (SULTR4;2) from Arabidopsis thaliana (Mouse-ear cress).